A 157-amino-acid chain; its full sequence is Arginine repressor (157 aa).

Belongs to the ArgR family.

It is found in the cytoplasm. It functions in the pathway amino-acid biosynthesis; L-arginine biosynthesis [regulation]. Regulates arginine biosynthesis genes. This is Arginine repressor from Bacteroides fragilis (strain YCH46).